The sequence spans 385 residues: S-adenosylmethionine synthase (385 aa).

His-15 is a binding site for ATP. Residue Asp-17 coordinates Mg(2+). A K(+)-binding site is contributed by Glu-43. The L-methionine site is built by Glu-56 and Gln-99. The tract at residues 99 to 109 is flexible loop; the sequence is QSPDINKGINN. Residues 164–166, 230–231, Asp-239, 245–246, Ala-262, and Lys-266 each bind ATP; these read DAK, RF, and RK. Position 239 (Asp-239) interacts with L-methionine. Lys-270 serves as a coordination point for L-methionine.

Belongs to the AdoMet synthase family. As to quaternary structure, homotetramer; dimer of dimers. Mg(2+) is required as a cofactor. It depends on K(+) as a cofactor.

The protein localises to the cytoplasm. It carries out the reaction L-methionine + ATP + H2O = S-adenosyl-L-methionine + phosphate + diphosphate. The protein operates within amino-acid biosynthesis; S-adenosyl-L-methionine biosynthesis; S-adenosyl-L-methionine from L-methionine: step 1/1. In terms of biological role, catalyzes the formation of S-adenosylmethionine (AdoMet) from methionine and ATP. The overall synthetic reaction is composed of two sequential steps, AdoMet formation and the subsequent tripolyphosphate hydrolysis which occurs prior to release of AdoMet from the enzyme. The polypeptide is S-adenosylmethionine synthase (Baumannia cicadellinicola subsp. Homalodisca coagulata).